A 950-amino-acid chain; its full sequence is Defective chorion protein, FC106 isoform (950 aa).

The signal sequence occupies residues Met1–Gly19. 3 disordered regions span residues Val23–Asn60, Ala184–Pro212, and Pro268–Tyr294. Over residues Ala32–Asp41 the composition is skewed to polar residues. A compositionally biased stretch (low complexity) spans Pro268 to Ala280. 5 consecutive repeat copies span residues Gln493–Gln518, Gln519–Gln544, Gln545–Gln570, Gln571–Gln596, and Gln597–Gln622. Residues Gln493–Gln788 form a 12 X 26 AA approximate tandem repeats, Glu, Met-rich region. The 6; approximate repeat unit spans residues Gln623–Gln652. The stretch at Gln653–Gln680 is one 7; approximate repeat. The 8; approximate repeat unit spans residues Gln681–Glu696. A 9; approximate repeat occupies Asp697–Gln720. A 10; approximate repeat occupies Gln721–Glu733. Residues Asn734 to Gln758 form an 11; approximate repeat. One copy of the 12; approximate repeat lies at Gln759 to Gln788. Residues Gly843–Ala875 form a disordered region.

Proteolytic cleavage of isoform FC106 generates 2 further products, S80 and S60.

The protein resides in the secreted. In terms of biological role, required for proper assembly of the eggshell. The sequence is that of Defective chorion protein, FC106 isoform from Drosophila melanogaster (Fruit fly).